The following is a 751-amino-acid chain: MTINLPEKEAKRVQIAVDRNPVETSFQKWAKPGHFSRTLAKGPNTTTWIWNLHADAHDFDSHTSDLQDISRKVFSAHFGQLGIILIWLSGMYFHGARFSNYEAWLSDPTHIKPSAQIVWPIVGQEILNGDVGGGFQGVQITSGFFQLWRASGITSELQLYTTAVVGLVLAGAMFFAGWFHYHKAAPKLEWFQNVESMLNHHLGGLLGLGSLGWAGHQIHVSLPVNKLLDAGVDPKEIPLPHEFFLNKQLMIDLYPSFAKGLTPFFTLQWSEYSDFLTFKGGLNEVTGGLNLSDTAHHHLAIAVLFLIAGHMYRTNWGIGHSIKEILDAHKGPLTGEGHKGLYEILTTSWHAQLAINLALFGSLSIVVAHHMYSMPPYPYLATDYATQLSLFTHHCWIGGFCIVGAGAHAAIFMVRDYDPTNNYNNLLDRVLRHRDAIISHLNWVSIFLGFHSFGLYIHNDTMSALGRPQDMFSDTAIQLQPVFAQWVQNTHFMAPQLTAPNALAATSATWGGDVVAVGGKVAMMPISLGTADFMVHHIHAFTIHVTVLILLKGVLFARSSRLIPDKANLGFRFPCDGPGRGGTCQVSAWDHVFLGLFWMYNSLSIVIFHFSWKMQSDVFGTVVNNTVSHITAGNFAQSANTINGWLRDFLWSQSSQVIQSYGSALSAYGLIFLGAHFILLTGMLDIFSGRGYWQELIESILWSHAKLKVAPTIQPRALSITQGRAVGVAHYLLGGIATTWSFFLARIIAVG.

The next 8 helical transmembrane spans lie at 73 to 96, 159 to 182, 198 to 222, 294 to 312, 349 to 372, 388 to 414, 436 to 458, and 533 to 551; these read VFSAHFGQLGIILIWLSGMYFHGA, LYTTAVVGLVLAGAMFFAGWFHYH, LNHHLGGLLGLGSLGWAGHQIHVSL, TAHHHLAIAVLFLIAGHMY, WHAQLAINLALFGSLSIVVAHHMY, LSLFTHHCWIGGFCIVGAGAHAAIFMV, AIISHLNWVSIFLGFHSFGLYIH, and FMVHHIHAFTIHVTVLILL. Positions 575 and 584 each coordinate [4Fe-4S] cluster. Transmembrane regions (helical) follow at residues 591-612 and 665-687; these read HVFLGLFWMYNSLSIVIFHFSW and LSAYGLIFLGAHFILLTGMLDIF. Position 676 (His-676) interacts with chlorophyll a'. Residues Met-683 and Tyr-692 each contribute to the chlorophyll a site. Trp-693 lines the phylloquinone pocket. Residues 725-745 form a helical membrane-spanning segment; it reads AVGVAHYLLGGIATTWSFFLA.

The protein belongs to the PsaA/PsaB family. The PsaA/B heterodimer binds the P700 chlorophyll special pair and subsequent electron acceptors. PSI consists of a core antenna complex that captures photons, and an electron transfer chain that converts photonic excitation into a charge separation. The eukaryotic PSI reaction center is composed of at least 11 subunits. P700 is a chlorophyll a/chlorophyll a' dimer, A0 is one or more chlorophyll a, A1 is one or both phylloquinones and FX is a shared 4Fe-4S iron-sulfur center. is required as a cofactor.

The protein resides in the plastid. It localises to the chloroplast thylakoid membrane. It carries out the reaction reduced [plastocyanin] + hnu + oxidized [2Fe-2S]-[ferredoxin] = oxidized [plastocyanin] + reduced [2Fe-2S]-[ferredoxin]. In terms of biological role, psaA and PsaB bind P700, the primary electron donor of photosystem I (PSI), as well as the electron acceptors A0, A1 and FX. PSI is a plastocyanin/cytochrome c6-ferredoxin oxidoreductase, converting photonic excitation into a charge separation, which transfers an electron from the donor P700 chlorophyll pair to the spectroscopically characterized acceptors A0, A1, FX, FA and FB in turn. Oxidized P700 is reduced on the lumenal side of the thylakoid membrane by plastocyanin or cytochrome c6. This Stigeoclonium helveticum (Green alga) protein is Photosystem I P700 chlorophyll a apoprotein A1.